The sequence spans 138 residues: Thioredoxin H2-1 (138 aa).

Positions 1–20 (MGGAFSTSKPKPAAGEEGGE) are disordered. A Thioredoxin domain is found at 12–129 (PAAGEEGGES…LEKTINTLRS (118 aa)). Catalysis depends on nucleophile residues C55 and C58. C55 and C58 are oxidised to a cystine.

This sequence belongs to the thioredoxin family. Plant H-type subfamily.

The protein resides in the cytoplasm. Probable thiol-disulfide oxidoreductase that may be involved in the redox regulation of a number of cytosolic enzymes. In Oryza sativa subsp. japonica (Rice), this protein is Thioredoxin H2-1.